The chain runs to 287 residues: uncharacterized protein (287 aa).

This sequence belongs to the A.longa ORF167/ORF288 family.

It localises to the plastid. This is an uncharacterized protein from Euglena longa (Euglenophycean alga).